Consider the following 148-residue polypeptide: Protein RESISTANCE TO POWDERY MILDEW 8.1 (148 aa).

Positions 1 to 148 (MPIGELAIGA…VISACSKIRA (148 aa)) constitute an RPW8 domain. Residues 7 to 23 (AIGAVLGVGAQAIYDRF) traverse the membrane as a helical segment. The stretch at 120-140 (DDIKEIKAKISEMDTKLAEVI) forms a coiled coil.

It belongs to the plant RPW8 protein family.

It localises to the membrane. Its function is as follows. Disease resistance (R) protein that induces localized, salicylic acid-dependent defenses. Confers resistance to powdery mildew (e.g. Erysiphe cichoracearum UCSC1). The protein is Protein RESISTANCE TO POWDERY MILDEW 8.1 of Arabidopsis thaliana (Mouse-ear cress).